Here is a 237-residue protein sequence, read N- to C-terminus: Fluoroquinolones export permease protein MT2761 (237 aa).

The next 6 membrane-spanning stretches (helical) occupy residues 20-40 (FLHAAVFSGLIWLAVLLPMPV), 49-69 (YVLVGDIAIIGFFFVGGTVFF), 96-116 (VLLAISLFVAVVVATIVHGLG), 119-139 (LLPLVAGIVLGTLLMLLVGFS), 147-167 (VTDWFLAAVIPLAIMLAPPVV), and 199-219 (LAPWQVGYAVVYPIVCAAGLC).

The complex is composed of 2 ATP-binding proteins and 2 transmembrane proteins.

Its subcellular location is the cell membrane. Functionally, part of the ABC transporter complex involved in fluoroquinolones export. Probably responsible for the translocation of the substrate across the membrane. This Mycobacterium tuberculosis (strain CDC 1551 / Oshkosh) protein is Fluoroquinolones export permease protein MT2761.